We begin with the raw amino-acid sequence, 197 residues long: Double homeobox protein 5 (197 aa).

2 DNA-binding regions (homeobox) span residues Gly-46–His-105 and Gly-121–Ser-180. Residues Gln-101–Ala-127 form a disordered region.

This sequence belongs to the paired homeobox family. Expressed in hepatoma Hep3B cells.

It is found in the nucleus. The sequence is that of Double homeobox protein 5 (DUX5) from Homo sapiens (Human).